A 632-amino-acid polypeptide reads, in one-letter code: CREB-regulated transcription coactivator 3 (632 aa).

S66 carries the phosphoserine modification. The span at 105-115 (NRLHSSHHRPV) shows a compositional bias: basic residues. The disordered stretch occupies residues 105-156 (NRLHSSHHRPVEKHGRQCDSSPYGSVYLSPPPDNNWRRTNSDSALHTSASSS). S133 carries the phosphoserine modification. S145 bears the Phosphoserine; by SIK2 mark. The segment covering 145–156 (SDSALHTSASSS) has biased composition (low complexity). T151 is subject to Phosphothreonine. S293 is subject to Phosphoserine. Over residues 310-338 (GIQNTCSNPSIQATMNNNVNNHTPPGRNN) the composition is skewed to polar residues. The segment at 310–455 (GIQNTCSNPS…ESQNFQPPSP (146 aa)) is disordered. A compositionally biased stretch (low complexity) spans 339-360 (PTLHPSLRLSSLSNPSLPTSAL). A phosphoserine mark is found at S372 and S391. The span at 372-405 (SPLTLTPGSESNRSISNQFSPTSPMDMLPNSQGV) shows a compositional bias: polar residues. A compositionally biased stretch (pro residues) spans 413–424 (SLPPLEPPPPYP). Low complexity predominate over residues 425 to 440 (LYTDQPQPQLHHTQQQ). Position 556 is a phosphoserine (S556).

Belongs to the TORC family. Binding, as a tetramer, through its N-terminal region, with the bZIP domain of creb1 enhances recruitment of taf4 to the promoter. 'Arg-300' in the bZIP domain of creb1 is essential for this interaction.

It is found in the nucleus. The protein localises to the cytoplasm. Functionally, transcriptional coactivator for creb1 which activates transcription through both consensus and variant cAMP response element (CRE) sites. Acts as a coactivator, in the SIK/TORC signaling pathway, being active when dephosphorylated and acts independently of creb1 'Ser-119' phosphorylation. Enhances the interaction of creb1 with taf4. Regulates the expression of specific CREB-activated genes such as the steroidogenic gene, StAR. Potent coactivator of ppargc1a and inducer of mitochondrial biogenesis in muscle cells. The sequence is that of CREB-regulated transcription coactivator 3 (crtc3) from Xenopus laevis (African clawed frog).